Reading from the N-terminus, the 106-residue chain is Iron-sulfur cluster assembly protein CyaY (106 aa).

This sequence belongs to the frataxin family.

In terms of biological role, involved in iron-sulfur (Fe-S) cluster assembly. May act as a regulator of Fe-S biogenesis. This is Iron-sulfur cluster assembly protein CyaY from Salmonella schwarzengrund (strain CVM19633).